Reading from the N-terminus, the 388-residue chain is Carbamoyl phosphate synthase small chain (388 aa).

The tract at residues 1–194 (MAQNPLSKPT…WPEGYARQEA (194 aa)) is CPSase. L-glutamine-binding residues include Ser-53, Gly-246, and Gly-248. Residues 198–387 (KVVAIDYGAK…AAAMDAQKAE (190 aa)) enclose the Glutamine amidotransferase type-1 domain. Cys-276 acts as the Nucleophile in catalysis. Residues Leu-277, Gln-280, Asn-318, Gly-320, and Phe-321 each contribute to the L-glutamine site. Active-site residues include His-360 and Glu-362.

The protein belongs to the CarA family. As to quaternary structure, composed of two chains; the small (or glutamine) chain promotes the hydrolysis of glutamine to ammonia, which is used by the large (or ammonia) chain to synthesize carbamoyl phosphate. Tetramer of heterodimers (alpha,beta)4.

The enzyme catalyses hydrogencarbonate + L-glutamine + 2 ATP + H2O = carbamoyl phosphate + L-glutamate + 2 ADP + phosphate + 2 H(+). The catalysed reaction is L-glutamine + H2O = L-glutamate + NH4(+). It functions in the pathway amino-acid biosynthesis; L-arginine biosynthesis; carbamoyl phosphate from bicarbonate: step 1/1. Its pathway is pyrimidine metabolism; UMP biosynthesis via de novo pathway; (S)-dihydroorotate from bicarbonate: step 1/3. Functionally, small subunit of the glutamine-dependent carbamoyl phosphate synthetase (CPSase). CPSase catalyzes the formation of carbamoyl phosphate from the ammonia moiety of glutamine, carbonate, and phosphate donated by ATP, constituting the first step of 2 biosynthetic pathways, one leading to arginine and/or urea and the other to pyrimidine nucleotides. The small subunit (glutamine amidotransferase) binds and cleaves glutamine to supply the large subunit with the substrate ammonia. The sequence is that of Carbamoyl phosphate synthase small chain from Ruegeria pomeroyi (strain ATCC 700808 / DSM 15171 / DSS-3) (Silicibacter pomeroyi).